The sequence spans 815 residues: Ent-sandaracopimara-8(14),15-diene synthase, chloroplastic (815 aa).

A chloroplast-targeting transit peptide spans 1–38 (MLPSSICSMGQIPRTSPHYYGMLPKQMSKGHPPMVTRA). Mg(2+) contacts are provided by Asp550, Asp554, Asn696, Thr700, and Glu704. The short motif at 550 to 554 (DDFFD) is the DDXXD motif element.

Belongs to the terpene synthase family. It depends on Mg(2+) as a cofactor.

The protein resides in the plastid. It localises to the chloroplast. The catalysed reaction is ent-copalyl diphosphate = ent-sandaracopimara-8(14),15-diene + diphosphate. It carries out the reaction 9alpha-copalyl diphosphate = (12E)-9alpha-labda-8(17),12,14-triene + diphosphate. Functionally, involved in the biosynthesis of oryzalexin A-F phytoalexins. Catalyzes the conversion of ent-copalyl diphosphate to the phytoalexin precursor ent-sandaracopimaradiene. This is Ent-sandaracopimara-8(14),15-diene synthase, chloroplastic from Oryza sativa subsp. japonica (Rice).